The following is a 338-amino-acid chain: MSNWSHKHILDLSSFSIEDYQTVVELANRFKTIPRSGSRKLPALQGRLIATLFFEPSTRTRSSFELAAKRLSADVQSFAPSNSSLIKGETPLDTVMTYVAMGAHVLVVRHGGTGVPEQLAKSLDQKKKNVSILNGGDGLHSHPSQGLLDLFTLTQFFNKESPSPRNIAGKRIAIVGDILHSRVARSNLWSLTACGANVVLCGPPSLLPDDFAKFVEAPPSGQKKDPIKNRGKVTISRCLKEALTDTDAVITLRLQKERMSENLLSNLDKYHNEYGITHESLKWCGKHVPVLHPGPVNRGIEMSSELLEDNSISLIENQVSNGIPIRMALLYLLSADKN.

Carbamoyl phosphate is bound by residues R59 and T60. K87 is an L-aspartate binding site. Positions 109, 142, and 145 each coordinate carbamoyl phosphate. Residues R182 and R253 each coordinate L-aspartate. G294 and P295 together coordinate carbamoyl phosphate.

It belongs to the aspartate/ornithine carbamoyltransferase superfamily. ATCase family. As to quaternary structure, heterododecamer (2C3:3R2) of six catalytic PyrB chains organized as two trimers (C3), and six regulatory PyrI chains organized as three dimers (R2).

It carries out the reaction carbamoyl phosphate + L-aspartate = N-carbamoyl-L-aspartate + phosphate + H(+). Its pathway is pyrimidine metabolism; UMP biosynthesis via de novo pathway; (S)-dihydroorotate from bicarbonate: step 2/3. Functionally, catalyzes the condensation of carbamoyl phosphate and aspartate to form carbamoyl aspartate and inorganic phosphate, the committed step in the de novo pyrimidine nucleotide biosynthesis pathway. The protein is Aspartate carbamoyltransferase catalytic subunit of Prochlorococcus marinus (strain SARG / CCMP1375 / SS120).